A 407-amino-acid polypeptide reads, in one-letter code: Na(+)-translocating NADH-quinone reductase subunit F (407 aa).

Residues isoleucine 6–valine 26 form a helical membrane-spanning segment. Positions glycine 35–valine 127 constitute a 2Fe-2S ferredoxin-type domain. Positions 70, 76, 79, and 111 each coordinate [2Fe-2S] cluster. The 140-residue stretch at valine 130 to lysine 269 folds into the FAD-binding FR-type domain.

The protein belongs to the NqrF family. As to quaternary structure, composed of six subunits; NqrA, NqrB, NqrC, NqrD, NqrE and NqrF. [2Fe-2S] cluster serves as cofactor. Requires FAD as cofactor.

The protein resides in the cell inner membrane. The catalysed reaction is a ubiquinone + n Na(+)(in) + NADH + H(+) = a ubiquinol + n Na(+)(out) + NAD(+). NQR complex catalyzes the reduction of ubiquinone-1 to ubiquinol by two successive reactions, coupled with the transport of Na(+) ions from the cytoplasm to the periplasm. The first step is catalyzed by NqrF, which accepts electrons from NADH and reduces ubiquinone-1 to ubisemiquinone by a one-electron transfer pathway. This Pseudomonas paraeruginosa (strain DSM 24068 / PA7) (Pseudomonas aeruginosa (strain PA7)) protein is Na(+)-translocating NADH-quinone reductase subunit F.